The chain runs to 386 residues: Demethylsterigmatocystin 6-O-methyltransferase (386 aa).

Residue 137–150 coordinates substrate; the sequence is FDISGPCTQILPDF. The substrate binding stretch occupies residues 177–197; it reads MFEWMPQHPKHMESLGHLMAL. S-adenosyl-L-methionine-binding positions include 228-229, Asp-253, 273-274, and Arg-289; these read GG and NF. His-293 functions as the Proton acceptor in the catalytic mechanism.

The protein belongs to the class I-like SAM-binding methyltransferase superfamily. Cation-independent O-methyltransferase family. COMT subfamily.

It catalyses the reaction 6-demethylsterigmatocystin + S-adenosyl-L-methionine = sterigmatocystin + S-adenosyl-L-homocysteine + H(+). It functions in the pathway mycotoxin biosynthesis; aflatoxin biosynthesis. Catalyzes both the conversion of demethylsterigmatocystin (DMST) to sterigmatocystin and the conversion of dihydrodemethylsterigmatocystin to dihydrosterigmatocystin (DHDMST) during aflatoxin biosynthesis. The chain is Demethylsterigmatocystin 6-O-methyltransferase (omtB) from Aspergillus flavus (strain ATCC 200026 / FGSC A1120 / IAM 13836 / NRRL 3357 / JCM 12722 / SRRC 167).